We begin with the raw amino-acid sequence, 327 residues long: DNA-directed RNA polymerase subunit alpha (327 aa).

The segment at 1–233 (MVREKVKVST…NLFIPFLHVE (233 aa)) is alpha N-terminal domain (alpha-NTD). Positions 264–327 (TKELAFQYIF…KKILDILEKK (64 aa)) are alpha C-terminal domain (alpha-CTD).

Belongs to the RNA polymerase alpha chain family. As to quaternary structure, in plastids the minimal PEP RNA polymerase catalytic core is composed of four subunits: alpha, beta, beta', and beta''. When a (nuclear-encoded) sigma factor is associated with the core the holoenzyme is formed, which can initiate transcription.

The protein localises to the plastid. It is found in the chloroplast. It catalyses the reaction RNA(n) + a ribonucleoside 5'-triphosphate = RNA(n+1) + diphosphate. Its function is as follows. DNA-dependent RNA polymerase catalyzes the transcription of DNA into RNA using the four ribonucleoside triphosphates as substrates. The chain is DNA-directed RNA polymerase subunit alpha from Capsella bursa-pastoris (Shepherd's purse).